Here is a 178-residue protein sequence, read N- to C-terminus: Bifunctional protein PyrR (178 aa).

A PRPP-binding motif is present at residues 99 to 111; the sequence is VVLVDDVIFKGRT.

The protein belongs to the purine/pyrimidine phosphoribosyltransferase family. PyrR subfamily.

The enzyme catalyses UMP + diphosphate = 5-phospho-alpha-D-ribose 1-diphosphate + uracil. Its function is as follows. Regulates the transcription of the pyrimidine nucleotide (pyr) operon in response to exogenous pyrimidines. Functionally, also displays a weak uracil phosphoribosyltransferase activity which is not physiologically significant. This chain is Bifunctional protein PyrR, found in Nostoc punctiforme (strain ATCC 29133 / PCC 73102).